The primary structure comprises 225 residues: UPF0758 protein Vapar_4033 (225 aa).

The MPN domain occupies 103–225 (VFDSPGTVKQ…SYSMAEKGLL (123 aa)). 3 residues coordinate Zn(2+): histidine 174, histidine 176, and aspartate 187. Positions 174 to 187 (HNHPSGSIEPSRAD) match the JAMM motif motif.

It belongs to the UPF0758 family.

In Variovorax paradoxus (strain S110), this protein is UPF0758 protein Vapar_4033.